A 336-amino-acid chain; its full sequence is Probable deoxyhypusine synthase (336 aa).

Residue Lys308 is the Nucleophile of the active site.

The protein belongs to the deoxyhypusine synthase family. It depends on NAD(+) as a cofactor.

The catalysed reaction is [eIF5A protein]-L-lysine + spermidine = [eIF5A protein]-deoxyhypusine + propane-1,3-diamine. It participates in protein modification; eIF5A hypusination. In terms of biological role, catalyzes the NAD-dependent oxidative cleavage of spermidine and the subsequent transfer of the butylamine moiety of spermidine to the epsilon-amino group of a specific lysine residue of the eIF-5A precursor protein to form the intermediate deoxyhypusine residue. This Pyrococcus furiosus (strain ATCC 43587 / DSM 3638 / JCM 8422 / Vc1) protein is Probable deoxyhypusine synthase.